The primary structure comprises 149 residues: MRTVVQRVSRASVTVEGRISGAIERGLLVLLGVGQDDAESEAEYLAEKIAGLRIFEDENEKMNLSVVDVGGAVLAVSQFTLYGDVRKGKRPSFDAAARPERAKELYEYFVAQIRAKGLRCETGVFQAMMHVELVNDGPVTILLDSKKEF.

A Gly-cisPro motif, important for rejection of L-amino acids motif is present at residues 137–138 (GP).

Belongs to the DTD family. Homodimer.

Its subcellular location is the cytoplasm. The enzyme catalyses glycyl-tRNA(Ala) + H2O = tRNA(Ala) + glycine + H(+). It carries out the reaction a D-aminoacyl-tRNA + H2O = a tRNA + a D-alpha-amino acid + H(+). Functionally, an aminoacyl-tRNA editing enzyme that deacylates mischarged D-aminoacyl-tRNAs. Also deacylates mischarged glycyl-tRNA(Ala), protecting cells against glycine mischarging by AlaRS. Acts via tRNA-based rather than protein-based catalysis; rejects L-amino acids rather than detecting D-amino acids in the active site. By recycling D-aminoacyl-tRNA to D-amino acids and free tRNA molecules, this enzyme counteracts the toxicity associated with the formation of D-aminoacyl-tRNA entities in vivo and helps enforce protein L-homochirality. The polypeptide is D-aminoacyl-tRNA deacylase (Koribacter versatilis (strain Ellin345)).